We begin with the raw amino-acid sequence, 429 residues long: Phosphoribosylamine--glycine ligase (429 aa).

Residues 109–316 (KDFLARHQIP…LVELCLAAID (208 aa)) enclose the ATP-grasp domain. Position 135 to 196 (135 to 196 (VREQGAPIVV…EEFLDGEEAS (62 aa))) interacts with ATP. The interval 212–234 (SQDHKRVGDKDTGPNTGGMGAYS) is disordered. The segment covering 213 to 223 (QDHKRVGDKDT) has biased composition (basic and acidic residues). The Mg(2+) site is built by E286 and N288.

Belongs to the GARS family. Requires Mg(2+) as cofactor. It depends on Mn(2+) as a cofactor.

The enzyme catalyses 5-phospho-beta-D-ribosylamine + glycine + ATP = N(1)-(5-phospho-beta-D-ribosyl)glycinamide + ADP + phosphate + H(+). It functions in the pathway purine metabolism; IMP biosynthesis via de novo pathway; N(1)-(5-phospho-D-ribosyl)glycinamide from 5-phospho-alpha-D-ribose 1-diphosphate: step 2/2. This Vibrio vulnificus (strain YJ016) protein is Phosphoribosylamine--glycine ligase.